We begin with the raw amino-acid sequence, 215 residues long: Ras-related protein Rab-5B (215 aa).

Threonine 2 is subject to N-acetylthreonine. Residues serine 29, alanine 30, glycine 32, lysine 33, serine 34, serine 35, histidine 46, glutamate 47, threonine 52, and glycine 78 each contribute to the GTP site. Serine 34 contacts Mg(2+). 2 consecutive short sequence motifs (switch) follow at residues 44–56 (QFHE…IGAA) and 77–93 (AGQE…YRGA). Residue threonine 52 coordinates Mg(2+). Serine 84 carries the post-translational modification Phosphoserine; by LRRK2. GTP contacts are provided by asparagine 133, lysine 134, aspartate 136, alanine 164, and lysine 165. Residues 186-215 (PQNLGGAAGRSRGVDLHEQSQQNKSQCCSN) form a disordered region. The span at 204–215 (QSQQNKSQCCSN) shows a compositional bias: low complexity. S-geranylgeranyl cysteine attachment occurs at residues cysteine 212 and cysteine 213.

This sequence belongs to the small GTPase superfamily. Rab family. In terms of assembly, binds EEA1. Interacts with RIN2 and RIN3, which probably regulate its pathway, possibly by acting as GEFs. Interacts with GDI1, GDI2, CHML and CHM; phosphorylation at Ser-84 disrupts this interaction. Mg(2+) is required as a cofactor. Post-translationally, phosphorylation of Ser-84 in the switch II region by LRRK2 prevents the association of RAB regulatory proteins, including CHM, CHML and RAB GDP dissociation inhibitors GDI1 and GDI2. In terms of processing, (Microbial infection) Glycosylated on arginine residues by S.typhimurium protein Ssek3.

It is found in the cell membrane. The protein localises to the early endosome membrane. Its subcellular location is the melanosome. It carries out the reaction GTP + H2O = GDP + phosphate + H(+). With respect to regulation, regulated by guanine nucleotide exchange factors (GEFs) which promote the exchange of bound GDP for free GTP. Regulated by GTPase activating proteins (GAPs) which increase the GTP hydrolysis activity. Inhibited by GDP dissociation inhibitors (GDIs). The small GTPases Rab are key regulators of intracellular membrane trafficking, from the formation of transport vesicles to their fusion with membranes. Rabs cycle between an inactive GDP-bound form and an active GTP-bound form that is able to recruit to membranes different sets of downstream effectors directly responsible for vesicle formation, movement, tethering and fusion. The polypeptide is Ras-related protein Rab-5B (Homo sapiens (Human)).